Reading from the N-terminus, the 387-residue chain is uncharacterized protein (387 aa).

The disordered stretch occupies residues 1–23 (MSSLPRNAVARNSKMHKKRDSGV). Positions 98 to 129 (KIARDLKKRQEDYEKTKLEVERLKRSEELANK) form a coiled coil. A disordered region spans residues 146 to 255 (ENNTVEPNNE…NKKKKKEKNK (110 aa)). Composition is skewed to low complexity over residues 162–175 (EQIT…TTEQ) and 182–194 (EQTT…QTAE). A compositionally biased stretch (basic and acidic residues) spans 204 to 213 (TVEKSGDQST). Over residues 214–231 (EKTTQQTAEESVEQSTEQ) the composition is skewed to polar residues.

This is an uncharacterized protein from Acanthamoeba polyphaga mimivirus (APMV).